The following is a 369-amino-acid chain: Probable methyltransferase TCM_000331 (369 aa).

The S-adenosyl-L-homocysteine site is built by Tyr-18, Cys-60, Asn-65, Asp-98, Leu-99, Ser-137, and Phe-138. 4 residues coordinate Mg(2+): Asn-176, Asp-261, Phe-263, and Asn-264.

It belongs to the methyltransferase superfamily. Type-7 methyltransferase family. Mg(2+) is required as a cofactor.

This chain is Probable methyltransferase TCM_000331, found in Theobroma cacao (Cacao).